The chain runs to 464 residues: Argininosuccinate lyase (464 aa).

Belongs to the lyase 1 family. Argininosuccinate lyase subfamily.

It is found in the cytoplasm. It carries out the reaction 2-(N(omega)-L-arginino)succinate = fumarate + L-arginine. It functions in the pathway amino-acid biosynthesis; L-arginine biosynthesis; L-arginine from L-ornithine and carbamoyl phosphate: step 3/3. This chain is Argininosuccinate lyase, found in Azotobacter vinelandii (strain DJ / ATCC BAA-1303).